Reading from the N-terminus, the 422-residue chain is Vitamin D3 receptor (422 aa).

The segment at residues 21–96 is a DNA-binding region (nuclear receptor); the sequence is PRICGVCGDR…IGMMKEFILT (76 aa). Residues Cys-24, Cys-27, Cys-41, Cys-44, Cys-60, Cys-66, Cys-76, and Cys-79 each contribute to the Zn(2+) site. 2 consecutive NR C4-type zinc fingers follow at residues 24–44 and 60–84; these read CGVC…CEGC and CPFN…LKRC. The tract at residues 97-126 is hinge; the sequence is DEEVQRKREMIMKRKEEEALKDSLRPKLSE. One can recognise an NR LBD domain in the interval 127 to 418; it reads EQQHIIAILL…LTPLVLEVFG (292 aa). Residue Tyr-143 coordinates calcitriol. A disordered region spans residues 161–185; sequence VSTGSYSPRPTLSFSGDSSSNSDLY. Polar residues predominate over residues 162-172; sequence STGSYSPRPTL. The segment covering 173 to 182 has biased composition (low complexity); that stretch reads SFSGDSSSNS. Ser-232 contributes to the calcitriol binding site. Residues 241-259 form an interaction with coactivator LXXLL motif region; that stretch reads KMIPGFRDLTSDDQIVLLK. Residues Arg-269, Ser-273, His-300, and His-392 each contribute to the calcitriol site. Positions 411–419 match the 9aaTAD motif; the sequence is PLVLEVFGN.

It belongs to the nuclear hormone receptor family. NR1 subfamily. Homodimer in the absence of bound vitamin D3. Heterodimer with RXRA after vitamin D3 binding. Interacts with MED1, NCOA1, NCOA2, NCOA3 and NCOA6 coactivators, leading to a strong increase of transcription of target genes. Interacts with the corepressor NCOR1. Interacts with SNW1. Interacts with IRX4, the interaction does not affect its transactivation activity. Interacts with CRY1. Interacts with CRY2 in a ligand-dependent manner. In terms of processing, ubiquitinated by UBR5, leading to its degradation: UBR5 specifically recognizes and binds ligand-bound VDR when it is not associated with coactivators (NCOAs). In presence of NCOAs, the UBR5-degron is not accessible, preventing its ubiquitination and degradation.

Its subcellular location is the nucleus. The protein resides in the cytoplasm. In terms of biological role, nuclear receptor for calcitriol, the active form of vitamin D3 which mediates the action of this vitamin on cells. Enters the nucleus upon vitamin D3 binding where it forms heterodimers with the retinoid X receptor/RXR. The VDR-RXR heterodimers bind to specific response elements on DNA and activate the transcription of vitamin D3-responsive target genes. Plays a central role in calcium homeostasis. Also functions as a receptor for the secondary bile acid lithocholic acid (LCA) and its metabolites. The protein is Vitamin D3 receptor (Vdr) of Mus musculus (Mouse).